The chain runs to 23 residues: FLPLVRGAAKLIPSVVCAISKRC.

Cys-17 and Cys-23 are oxidised to a cystine.

In terms of tissue distribution, expressed by the skin glands.

Its subcellular location is the secreted. Its function is as follows. Mast cell degranulating peptide. Causes histamine release from rat peritoneal mast cells in vitro. Has antibacterial activity against the Gram-negative bacterium E.coli K12 and Gram-positive bacterium M.luteus NCT C2665. The polypeptide is Brevinin-1SE (Lithobates sevosus (Dusky gopher frog)).